A 180-amino-acid chain; its full sequence is Protein Flattop (180 aa).

The interval 111-180 is disordered; the sequence is PQISGKASGK…AGDKVLQAQS (70 aa).

It belongs to the Flattop family.

It is found in the cytoplasm. Its subcellular location is the cytoskeleton. It localises to the cilium basal body. The protein resides in the cell projection. The protein localises to the cilium. It is found in the apical cell membrane. Its subcellular location is the cilium axoneme. In terms of biological role, microtubule inner protein (MIP) part of the dynein-decorated doublet microtubules (DMTs) in cilia axoneme. Acts as a regulator of cilium basal body docking and positioning in mono- and multiciliated cells. Regulates basal body docking and cilia formation in multiciliated lung cells. Regulates kinocilium positioning and stereocilia bundle morphogenesis in the inner ear. This is Protein Flattop from Xenopus laevis (African clawed frog).